The chain runs to 30 residues: Sperm protamine P5 (30 aa).

The interval 1–30 (YRRRRRRGRRGRRRRGRRRRSRGRRRAHGG) is disordered.

In terms of tissue distribution, testis.

The protein localises to the nucleus. The protein resides in the chromosome. Protamines substitute for histones in the chromatin of sperm during the haploid phase of spermatogenesis. They compact sperm DNA into a highly condensed, stable and inactive complex. In Octopus vulgaris (Common octopus), this protein is Sperm protamine P5.